We begin with the raw amino-acid sequence, 400 residues long: Sensory histidine kinase/phosphatase NtrB (400 aa).

Low complexity-rich tracts occupy residues 1 to 10 (MARASAAAPL) and 18 to 27 (RAPSSSYRPV). The segment at 1 to 27 (MARASAAAPLPRRPARPRAPSSSYRPV) is disordered. The 71-residue stretch at 29-99 (PCIDPSVMLN…IEQVQQGRHR (71 aa)) folds into the PAS domain. One can recognise a Histidine kinase domain in the interval 163 to 381 (MLGHEVKNPL…VFKVSLPMFD (219 aa)). The residue at position 166 (histidine 166) is a Phosphohistidine; by autocatalysis.

Autophosphorylated.

It localises to the cytoplasm. The catalysed reaction is ATP + protein L-histidine = ADP + protein N-phospho-L-histidine.. Member of the two-component regulatory system NtrB/NtrC, which controls expression of the nitrogen-regulated (ntr) genes in response to nitrogen limitation. Under conditions of nitrogen limitation, NtrB autophosphorylates and transfers the phosphoryl group to NtrC. In the presence of nitrogen, acts as a phosphatase that dephosphorylates and inactivates NtrC. The polypeptide is Sensory histidine kinase/phosphatase NtrB (Azospirillum brasilense).